Here is a 102-residue protein sequence, read N- to C-terminus: Small ribosomal subunit protein uS10 (102 aa).

The protein belongs to the universal ribosomal protein uS10 family. As to quaternary structure, part of the 30S ribosomal subunit.

Functionally, involved in the binding of tRNA to the ribosomes. The sequence is that of Small ribosomal subunit protein uS10 from Bifidobacterium adolescentis (strain ATCC 15703 / DSM 20083 / NCTC 11814 / E194a).